We begin with the raw amino-acid sequence, 144 residues long: MVVRKEKKSRKYRGYRTHGWGTKGQHRDRGAQGGRQIGMHKEKWSWTVKFGEGWYGKHGFRNPTSKLVNAIGLRKLQEYIDNDKIKIEEENGKKVVDLAKYGYDKLLGGGNLRLPLVIKVAKATEKAKERVKEIGGEIILTSSE.

Basic residues predominate over residues 1 to 16 (MVVRKEKKSRKYRGYR). The segment at 1–35 (MVVRKEKKSRKYRGYRTHGWGTKGQHRDRGAQGGR) is disordered.

This sequence belongs to the universal ribosomal protein uL15 family. As to quaternary structure, part of the 50S ribosomal subunit.

Its function is as follows. Binds to the 23S rRNA. The protein is Large ribosomal subunit protein uL15 of Sulfolobus acidocaldarius (strain ATCC 33909 / DSM 639 / JCM 8929 / NBRC 15157 / NCIMB 11770).